The following is a 539-amino-acid chain: MLKGFTPWPDELAETYRKNGCWAGETFGDLLRDRAAKYGDRIAITCGNTHWSYRELDTRADRLAAGFQKLGIQQMDRVVVQLPNIKEFFEVIFALFRLGALPVFALPSHRSSEITYFCEFAEAAAYIIPDAYSGFDYRSLARQVQSKLPTLKNIIVAGEAEEFLPLEDLHAEPVKLPEVKSSDVAFLQLSGGSTGLSKLIPRTHDDYIYSLKRSVEVCWLDHSTVYLAALPMAHNYPLSSPGVLGVLYAGGRVVLSPSPSPDDAFPLIEREKVTITALVPPLAMVWMDAASSRRDDLSSLQVLQVGGAKFSAEAARRVKAVFGCTLQQVFGMAEGLVNYTRLDDPEEIIVNTQGKPMSPYDEMRVWDDHDRDVKPGETGHLLTRGPYTIRGYYKAEEHNAASFTEDGFYRTGDIVRLTRDGYIVVEGRAKDQINRGGEKVAAEEVENHLLAHPAVHDAAMVSMPDQFLGERSCVFIIPRDEAPKAAELKAFLRERGLAAYKIPDRVEFVESFPQTGVGKVSKKALREAISEKLLAGFKK.

Gly-191 contacts ATP. Residues 234–235 (HN) and Ser-240 contribute to the substrate site. ATP contacts are provided by Gly-307, Val-329, Asp-413, Arg-428, and Lys-519. Lys-519 contributes to the substrate binding site.

The protein belongs to the ATP-dependent AMP-binding enzyme family.

The protein localises to the cytoplasm. It catalyses the reaction 2,3-dihydroxybenzoate + holo-[ACP] + ATP = 2,3-dihydroxybenzoyl-[ACP] + AMP + diphosphate. It functions in the pathway siderophore biosynthesis; bacillibactin biosynthesis. Functionally, involved in the biosynthesis of the catecholic siderophore bacillibactin. Catalyzes the activation of the carboxylate group of 2,3-dihydroxy-benzoate (DHB), via ATP-dependent PPi exchange reactions, to the acyladenylate. This chain is 2,3-dihydroxybenzoate-AMP ligase, found in Bacillus subtilis (strain 168).